Consider the following 473-residue polypeptide: Probable DNA N(6)-methyladenine demethylase ALKBH1B (473 aa).

2-oxoglutarate is bound at residue 357-359; sequence NFY. The Fe cation site is built by H368, D391, and H449. 461 to 465 contributes to the 2-oxoglutarate binding site; that stretch reads RLFFR.

It belongs to the alkB family. Fe(2+) serves as cofactor. Undetectable.

The enzyme catalyses an N(6)-methyl-2'-deoxyadenosine in DNA + 2-oxoglutarate + O2 = a 2'-deoxyadenosine in DNA + formaldehyde + succinate + CO2. Dioxygenase that may catalyzes DNA N(6)-methyladenine (6 mA) demethylation. Requires molecular oxygen, alpha-ketoglutarate and iron. The polypeptide is Probable DNA N(6)-methyladenine demethylase ALKBH1B (Arabidopsis thaliana (Mouse-ear cress)).